The chain runs to 111 residues: Prostate and testis expressed protein 2 (111 aa).

The signal sequence occupies residues 1 to 18; that stretch reads MFVLVMICLFCQYWGVLN. The UPAR/Ly6 domain occupies 27–108; sequence LLCYKCKKYH…CKHSNYCNLP (82 aa). Disulfide bonds link Cys-29-Cys-55, Cys-32-Cys-40, Cys-47-Cys-78, and Cys-82-Cys-99.

The protein belongs to the PATE family. Expressed in prostate, testis, brain and lung.

The protein resides in the secreted. In Mus musculus (Mouse), this protein is Prostate and testis expressed protein 2 (Pate2).